We begin with the raw amino-acid sequence, 823 residues long: DNA ligase (823 aa).

NAD(+) is bound by residues 32–36 (DAEYD), 81–82 (SL), and E121. Residue K123 is the N6-AMP-lysine intermediate of the active site. R144, E181, K299, and K323 together coordinate NAD(+). Zn(2+)-binding residues include C449, C452, C467, and C473. Positions 528 to 558 (ETADKGSSENENGDAETVSGDLSKYNTQNGK) are disordered. Residues 746-823 (GINKAVAGKT…SEAELLTLLC (78 aa)) enclose the BRCT domain.

The protein belongs to the NAD-dependent DNA ligase family. LigA subfamily. Mg(2+) is required as a cofactor. The cofactor is Mn(2+).

It carries out the reaction NAD(+) + (deoxyribonucleotide)n-3'-hydroxyl + 5'-phospho-(deoxyribonucleotide)m = (deoxyribonucleotide)n+m + AMP + beta-nicotinamide D-nucleotide.. Functionally, DNA ligase that catalyzes the formation of phosphodiester linkages between 5'-phosphoryl and 3'-hydroxyl groups in double-stranded DNA using NAD as a coenzyme and as the energy source for the reaction. It is essential for DNA replication and repair of damaged DNA. The protein is DNA ligase of Neisseria gonorrhoeae (strain NCCP11945).